A 243-amino-acid polypeptide reads, in one-letter code: Carboxy-S-adenosyl-L-methionine synthase (243 aa).

S-adenosyl-L-methionine contacts are provided by residues tyrosine 39, 64 to 66, 89 to 90, 117 to 118, asparagine 132, and arginine 199; these read GCS, DN, and DL.

Belongs to the class I-like SAM-binding methyltransferase superfamily. Cx-SAM synthase family. Homodimer.

The catalysed reaction is prephenate + S-adenosyl-L-methionine = carboxy-S-adenosyl-L-methionine + 3-phenylpyruvate + H2O. In terms of biological role, catalyzes the conversion of S-adenosyl-L-methionine (SAM) to carboxy-S-adenosyl-L-methionine (Cx-SAM). The polypeptide is Carboxy-S-adenosyl-L-methionine synthase (Pseudoalteromonas atlantica (strain T6c / ATCC BAA-1087)).